Reading from the N-terminus, the 280-residue chain is Mevalonyl-coenzyme A hydratase SIDH (280 aa).

Residues 278-280 (SKL) carry the PTS1-type peroxisomal targeting signal motif.

Belongs to the enoyl-CoA hydratase/isomerase family.

It localises to the peroxisome. It participates in siderophore biosynthesis. In terms of biological role, mevalonyl-coenzyme A hydratase; part of the gene cluster that mediates the biosynthesis of at least 11 siderophores, including beauverichelin A, dimerumic acid (DA), Na-dimethyl coprogen (NADC), eleutherazine B, ferricrocin (FC), fusarinine A, fusarinine C (FsC), metachelin A, mevalonolactone, rhodotorulic acid (RA) and tenellin. This cocktail of siderophores for iron metabolism is essential for virulence, and more specifically for the fungal virulence in penetrating through the host cuticle. Siderophore synthesis is also involved in conidial germination under iron-deficient conditions. For biosynthesis of fusarinine C, the transacylase SIDF transfers anhydromevalonyl to N(5)-hydroxyornithine. The required anhydromevalonyl-CoA moiety is derived from mevalonate by CoA ligation and dehydration catalyzed by SIDI and sidH respectively. SIDH is not essential for siderophore production, probably due to functional redundancy of this protein family, as there are 15 homologs of SIDH in B.bassiana. This Beauveria bassiana (strain ARSEF 2860) (White muscardine disease fungus) protein is Mevalonyl-coenzyme A hydratase SIDH.